The sequence spans 204 residues: Recombination protein RecR (204 aa).

The segment at 63-78 adopts a C4-type zinc-finger fold; sequence CRICCNVADSELCPIC. The Toprim domain occupies 86 to 181; sequence NKICVVEQPQ…KVTRLARGLP (96 aa).

The protein belongs to the RecR family.

May play a role in DNA repair. It seems to be involved in an RecBC-independent recombinational process of DNA repair. It may act with RecF and RecO. This is Recombination protein RecR from Dehalococcoides mccartyi (strain ATCC BAA-2100 / JCM 16839 / KCTC 5957 / BAV1).